Reading from the N-terminus, the 96-residue chain is Teretoxin Tgu6.1 (96 aa).

Positions Met1 to Ala16 are cleaved as a signal peptide. Residues Phe17–Arg52 constitute a propeptide that is removed on maturation.

Contains 3 disulfide bonds. As to expression, expressed by the venom duct.

The protein localises to the secreted. In terms of biological role, the recombinant protein causes paralysis to polychaete worms (Nereis virens), the natural prey of terebrid snails. The protein is Teretoxin Tgu6.1 of Terebra guttata (White spotted auger snail).